Consider the following 292-residue polypeptide: Cyclin-dependent kinase 5 (292 aa).

One can recognise a Protein kinase domain in the interval 4 to 286 (YEKLEKIGEG…AEEALQHPYF (283 aa)). ATP-binding positions include 10 to 18 (IGEGTYGTV) and Lys-33. At Tyr-15 the chain carries Phosphotyrosine; by ABL1, EPHA4 and FYN. At Thr-17 the chain carries Phosphothreonine. Lys-56 bears the N6-acetyllysine mark. Ser-72 is modified (phosphoserine). Catalysis depends on Asp-126, which acts as the Proton acceptor. The residue at position 159 (Ser-159) is a Phosphoserine.

This sequence belongs to the protein kinase superfamily. CMGC Ser/Thr protein kinase family. CDC2/CDKX subfamily. Heterodimer composed of a catalytic subunit CDK5 and a regulatory subunit CDK5R1 (p25) and macromolecular complex composed of at least CDK5, CDK5R1 (p35) and CDK5RAP1 or CDK5RAP2 or CDK5RAP3. Only the heterodimer shows kinase activity. Under neurotoxic stress and neuronal injury conditions, p35 is cleaved by calpain to generate p25 that hyperactivates CDK5, that becomes functionally disabled and often toxic. Found in a trimolecular complex with CABLES1 and ABL1. Interacts with CABLES1 and CABLES2. Interacts with AATK and GSTP1. Binds to HDAC1 when in complex with p25. Interaction with myristoylation p35 promotes CDK5 association with membranes. Both isoforms 1 and 2 interacts with beta-catenin/CTNNB1. Interacts with delta-catenin/CTNND2 and APEX1. Interacts with P53/TP53 in neurons. Interacts with PTK2/FAK1. Interacts with EPHA4; may mediate the activation of NGEF by EPHA4. The complex p35/CDK5 interacts with CLOCK. Interacts with HTR6. Phosphorylation on Tyr-15 by ABL1 and FYN, and on Ser-159 by casein kinase 1 promotes kinase activity. By contrast, phosphorylation at Thr-14 inhibits activity. Post-translationally, phosphorylation at Ser-159 is essential for maximal catalytic activity. In terms of tissue distribution, expressed in hippocampal neuronal synaptic termini (at protein level). Expressed predominantly in post-mitotic neurons of the central and peripheral nervous system.

It is found in the cytoplasm. The protein localises to the nucleus. The protein resides in the cell membrane. Its subcellular location is the perikaryon. It localises to the cell projection. It is found in the lamellipodium. The protein localises to the growth cone. The protein resides in the postsynaptic density. Its subcellular location is the synapse. The catalysed reaction is L-seryl-[protein] + ATP = O-phospho-L-seryl-[protein] + ADP + H(+). It catalyses the reaction L-threonyl-[protein] + ATP = O-phospho-L-threonyl-[protein] + ADP + H(+). Its activity is regulated as follows. Inhibited by 2-(1-ethyl-2-hydroxyethylamino)-6-benzylamino-9-isopropylpurine (roscovitine), 1-isopropyl-4-aminobenzyl-6-ether-linked benzimidazoles, resveratrol, AT-7519 and olomoucine. Activated by CDK5R1 (p35) and CDK5R2 (p39) during the development of the nervous system; degradation of CDK5R1 (p35) and CDK5R2 (p39) by proteasome result in down regulation of kinase activity, during this process, CDK5 phosphorylates p35 and induces its ubiquitination and subsequent degradation. Kinase activity is mainly determined by the amount of p35 available and subcellular location; reversible association to plasma membrane inhibits activity. Long-term inactivation as well as CDK5R1 (p25)-mediated hyperactivation of CDK5 triggers cell death. The pro-death activity of hyperactivated CDK5 is suppressed by membrane association of CDK5, via myristoylation of p35. Brain-derived neurotrophic factor, glial-derived neurotrophic factor, nerve growth factor (NGF), retinoic acid, laminin and neuregulin promote activity. Neurotoxicity enhances nuclear activity, thus leading to MEF2 phosphorylation and inhibition prior to apoptosis of cortical neurons. Repression by GSTP1 via p25/p35 translocation prevents neurodegeneration. Proline-directed serine/threonine-protein kinase essential for neuronal cell cycle arrest and differentiation and may be involved in apoptotic cell death in neuronal diseases by triggering abortive cell cycle re-entry. Interacts with D1 and D3-type G1 cyclins. Phosphorylates SRC, NOS3, VIM/vimentin, p35/CDK5R1, MEF2A, SIPA1L1, SH3GLB1, PXN, PAK1, MCAM/MUC18, SEPT5, SYN1, DNM1, AMPH, SYNJ1, CDK16, RAC1, RHOA, CDC42, TONEBP/NFAT5, MAPT/TAU, MAP1B, histone H1, p53/TP53, HDAC1, APEX1, PTK2/FAK1, huntingtin/HTT, ATM, MAP2, NEFH and NEFM. Regulates several neuronal development and physiological processes including neuronal survival, migration and differentiation, axonal and neurite growth, synaptogenesis, oligodendrocyte differentiation, synaptic plasticity and neurotransmission, by phosphorylating key proteins. Negatively regulates the CACNA1B/CAV2.2 -mediated Ca(2+) release probability at hippocampal neuronal soma and synaptic terminals. Activated by interaction with CDK5R1 (p35) and CDK5R2 (p39), especially in postmitotic neurons, and promotes CDK5R1 (p35) expression in an autostimulation loop. Phosphorylates many downstream substrates such as Rho and Ras family small GTPases (e.g. PAK1, RAC1, RHOA, CDC42) or microtubule-binding proteins (e.g. MAPT/TAU, MAP2, MAP1B), and modulates actin dynamics to regulate neurite growth and/or spine morphogenesis. Also phosphorylates exocytosis associated proteins such as MCAM/MUC18, SEPT5, SYN1, and CDK16/PCTAIRE1 as well as endocytosis associated proteins such as DNM1, AMPH and SYNJ1 at synaptic terminals. In the mature central nervous system (CNS), regulates neurotransmitter movements by phosphorylating substrates associated with neurotransmitter release and synapse plasticity; synaptic vesicle exocytosis, vesicles fusion with the presynaptic membrane, and endocytosis. Promotes cell survival by activating anti-apoptotic proteins BCL2 and STAT3, and negatively regulating of JNK3/MAPK10 activity. Phosphorylation of p53/TP53 in response to genotoxic and oxidative stresses enhances its stabilization by preventing ubiquitin ligase-mediated proteasomal degradation, and induces transactivation of p53/TP53 target genes, thus regulating apoptosis. Phosphorylation of p35/CDK5R1 enhances its stabilization by preventing calpain-mediated proteolysis producing p25/CDK5R1 and avoiding ubiquitin ligase-mediated proteasomal degradation. During aberrant cell-cycle activity and DNA damage, p25/CDK5 activity elicits cell-cycle activity and double-strand DNA breaks that precedes neuronal death by deregulating HDAC1. DNA damage triggered phosphorylation of huntingtin/HTT in nuclei of neurons protects neurons against polyglutamine expansion as well as DNA damage mediated toxicity. Phosphorylation of PXN reduces its interaction with PTK2/FAK1 in matrix-cell focal adhesions (MCFA) during oligodendrocytes (OLs) differentiation. Negative regulator of Wnt/beta-catenin signaling pathway. Activator of the GAIT (IFN-gamma-activated inhibitor of translation) pathway, which suppresses expression of a post-transcriptional regulon of proinflammatory genes in myeloid cells; phosphorylates the linker domain of glutamyl-prolyl tRNA synthetase (EPRS) in a IFN-gamma-dependent manner, the initial event in assembly of the GAIT complex. Phosphorylation of SH3GLB1 is required for autophagy induction in starved neurons. Phosphorylation of TONEBP/NFAT5 in response to osmotic stress mediates its rapid nuclear localization. MEF2 is inactivated by phosphorylation in nucleus in response to neurotoxin, thus leading to neuronal apoptosis. APEX1 AP-endodeoxyribonuclease is repressed by phosphorylation, resulting in accumulation of DNA damage and contributing to neuronal death. NOS3 phosphorylation down regulates NOS3-derived nitrite (NO) levels. SRC phosphorylation mediates its ubiquitin-dependent degradation and thus leads to cytoskeletal reorganization. May regulate endothelial cell migration and angiogenesis via the modulation of lamellipodia formation. Involved in dendritic spine morphogenesis by mediating the EFNA1-EPHA4 signaling. The complex p35/CDK5 participates in the regulation of the circadian clock by modulating the function of CLOCK protein: phosphorylates CLOCK at 'Thr-451' and 'Thr-461' and regulates the transcriptional activity of the CLOCK-BMAL1 heterodimer in association with altered stability and subcellular distribution. This Rattus norvegicus (Rat) protein is Cyclin-dependent kinase 5.